A 78-amino-acid polypeptide reads, in one-letter code: Exodeoxyribonuclease 7 small subunit (78 aa).

It belongs to the XseB family. As to quaternary structure, heterooligomer composed of large and small subunits.

The protein resides in the cytoplasm. It catalyses the reaction Exonucleolytic cleavage in either 5'- to 3'- or 3'- to 5'-direction to yield nucleoside 5'-phosphates.. Bidirectionally degrades single-stranded DNA into large acid-insoluble oligonucleotides, which are then degraded further into small acid-soluble oligonucleotides. The protein is Exodeoxyribonuclease 7 small subunit of Finegoldia magna (strain ATCC 29328 / DSM 20472 / WAL 2508) (Peptostreptococcus magnus).